We begin with the raw amino-acid sequence, 1059 residues long: Carbamoyl phosphate synthase large chain (1059 aa).

The carboxyphosphate synthetic domain stretch occupies residues 1 to 401 (MPKRTDIHKI…ALLKAVASLE (401 aa)). ATP contacts are provided by Arg129, Arg169, Gly175, Gly176, Lys208, Ile210, Glu215, Gly241, Ile242, His243, Gln284, and Glu298. In terms of domain architecture, ATP-grasp 1 spans 133–327 (KELMQELGEP…IAKLAAKIAV (195 aa)). 3 residues coordinate Mg(2+): Gln284, Glu298, and Asn300. 3 residues coordinate Mn(2+): Gln284, Glu298, and Asn300. An oligomerization domain region spans residues 402–546 (IDQKDLLSKE…YSTYETENES (145 aa)). The tract at residues 547-929 (RRSAKPSVLV…ALYKAFAGAG (383 aa)) is carbamoyl phosphate synthetic domain. The ATP-grasp 2 domain maps to 671–861 (DQVIKDLNLR…MAQLATKVIL (191 aa)). Arg707, Ala746, Leu748, Glu752, Gly777, Val778, His779, Ser780, Gln820, and Glu832 together coordinate ATP. Gln820, Glu832, and Asn834 together coordinate Mg(2+). The Mn(2+) site is built by Gln820, Glu832, and Asn834. The region spanning 930 to 1059 (MEVPDNGAVL…EMTSFKTTEL (130 aa)) is the MGS-like domain. Residues 930–1059 (MEVPDNGAVL…EMTSFKTTEL (130 aa)) are allosteric domain.

It belongs to the CarB family. Composed of two chains; the small (or glutamine) chain promotes the hydrolysis of glutamine to ammonia, which is used by the large (or ammonia) chain to synthesize carbamoyl phosphate. Tetramer of heterodimers (alpha,beta)4. The cofactor is Mg(2+). Mn(2+) is required as a cofactor.

It catalyses the reaction hydrogencarbonate + L-glutamine + 2 ATP + H2O = carbamoyl phosphate + L-glutamate + 2 ADP + phosphate + 2 H(+). It carries out the reaction hydrogencarbonate + NH4(+) + 2 ATP = carbamoyl phosphate + 2 ADP + phosphate + 2 H(+). It participates in amino-acid biosynthesis; L-arginine biosynthesis; carbamoyl phosphate from bicarbonate: step 1/1. It functions in the pathway pyrimidine metabolism; UMP biosynthesis via de novo pathway; (S)-dihydroorotate from bicarbonate: step 1/3. Functionally, large subunit of the glutamine-dependent carbamoyl phosphate synthetase (CPSase). CPSase catalyzes the formation of carbamoyl phosphate from the ammonia moiety of glutamine, carbonate, and phosphate donated by ATP, constituting the first step of 2 biosynthetic pathways, one leading to arginine and/or urea and the other to pyrimidine nucleotides. The large subunit (synthetase) binds the substrates ammonia (free or transferred from glutamine from the small subunit), hydrogencarbonate and ATP and carries out an ATP-coupled ligase reaction, activating hydrogencarbonate by forming carboxy phosphate which reacts with ammonia to form carbamoyl phosphate. In Limosilactobacillus fermentum (strain NBRC 3956 / LMG 18251) (Lactobacillus fermentum), this protein is Carbamoyl phosphate synthase large chain.